The following is a 213-amino-acid chain: Thymidylate kinase (213 aa).

9 to 16 is a binding site for ATP; sequence GLEGAGKS.

It belongs to the thymidylate kinase family.

The catalysed reaction is dTMP + ATP = dTDP + ADP. In terms of biological role, phosphorylation of dTMP to form dTDP in both de novo and salvage pathways of dTTP synthesis. In Aeromonas hydrophila subsp. hydrophila (strain ATCC 7966 / DSM 30187 / BCRC 13018 / CCUG 14551 / JCM 1027 / KCTC 2358 / NCIMB 9240 / NCTC 8049), this protein is Thymidylate kinase.